A 766-amino-acid polypeptide reads, in one-letter code: TRP-like ion channel protein flc1 (766 aa).

An N-terminal signal peptide occupies residues 1–24 (MRIPLFILTFLFTFFSLATTPVSA). Residues 25 to 170 (DSGVLYTDAV…ANGKTAHQKG (146 aa)) are Lumenal-facing. N56, N73, N89, and N109 each carry an N-linked (GlcNAc...) asparagine glycan. Residues 171–191 (VIWASAIFTLVAFLVAIWHTA) traverse the membrane as a helical segment. Topologically, residues 192 to 205 (SGTSTSPIQYRWFD) are cytoplasmic. Residues 206–226 (ILFIFQVAAASGLLHLNYPLV) form a helical membrane-spanning segment. Residues 227 to 351 (YTNFVQNFHW…RIPEANAYDT (125 aa)) lie on the Lumenal side of the membrane. Residue N325 is glycosylated (N-linked (GlcNAc...) asparagine). A helical membrane pass occupies residues 352–372 (IWFVFLALIGIFIAFHVLLFG). The Cytoplasmic portion of the chain corresponds to 373–407 (MVLLFDRMGRNRSHLGWAARLRRMWWPFCVGNSLR). A helical membrane pass occupies residues 408–428 (LCLIGFFPIWIFAFWQFHIGD). At 429–432 (SGLS) the chain is on the lumenal side. A helical transmembrane segment spans residues 433-453 (IFWAVFGILLTLVPLATAFLL). Residues 454-493 (SLLRARRISSTSPEINSLYTSFRYFHSIGVLYRQYRQKFH) are Cytoplasmic-facing. The helical transmembrane segment at 494–514 (YFWFTPFVLAMIARAGFIAFG) threads the bilayer. Topologically, residues 515 to 517 (PAS) are lumenal. A helical transmembrane segment spans residues 518 to 538 (AWAQVIGNLVVEFIVLVALLA). Residues 539–548 (CRPHKDKKGD) are Cytoplasmic-facing. The helical transmembrane segment at 549–569 (WLGAFLSICRLIAIGLLIAFI) threads the bilayer. The Lumenal portion of the chain corresponds to 570–580 (PDMNVKPIPRA). Residues 581-601 (VIAFVIIVFYGVPVVFLFVGF) form a helical membrane-spanning segment. Residues 602–766 (LWNIGYGYLW…TDEKQWSRRY (165 aa)) lie on the Cytoplasmic side of the membrane. Positions 704-766 (ASSADGALSP…TDEKQWSRRY (63 aa)) are disordered. Basic and acidic residues predominate over residues 757 to 766 (TDEKQWSRRY).

Belongs to the transient receptor potential (TRP) ion channel family.

Its subcellular location is the endoplasmic reticulum membrane. In terms of biological role, endoplasmic reticulum membrane flavin carrier protein that plays a crucial role in Ca(2+) signaling/homeostasis via the modulation of the calcineurin-Crz1 stress response pathway which is important for both stress responses and virulence. This Cryptococcus neoformans var. grubii serotype A (strain H99 / ATCC 208821 / CBS 10515 / FGSC 9487) (Filobasidiella neoformans var. grubii) protein is TRP-like ion channel protein flc1.